Reading from the N-terminus, the 347-residue chain is Adenine deaminase (347 aa).

Positions 16, 18, and 204 each coordinate Zn(2+). The active-site Proton donor is the glutamate 207. Residue aspartate 285 coordinates Zn(2+). Substrate is bound at residue aspartate 286.

The protein belongs to the metallo-dependent hydrolases superfamily. Adenosine and AMP deaminases family. Adenine deaminase type 2 subfamily. It depends on Zn(2+) as a cofactor.

The protein resides in the cytoplasm. It is found in the nucleus. It carries out the reaction adenine + H2O + H(+) = hypoxanthine + NH4(+). In terms of biological role, catalyzes the hydrolytic deamination of adenine to hypoxanthine. Plays an important role in the purine salvage pathway and in nitrogen catabolism. In Candida glabrata (strain ATCC 2001 / BCRC 20586 / JCM 3761 / NBRC 0622 / NRRL Y-65 / CBS 138) (Yeast), this protein is Adenine deaminase.